Reading from the N-terminus, the 84-residue chain is MAHKKAGGSTRNGRDSESKRLGVKRFGGESVLAGNIIVRQRGTKFHAGVNVGIGRDHTLFALTDGKVKFEVKGANNRKFISIEA.

Residues 1 to 22 (MAHKKAGGSTRNGRDSESKRLG) form a disordered region.

This sequence belongs to the bacterial ribosomal protein bL27 family.

The chain is Large ribosomal subunit protein bL27 from Shewanella baltica (strain OS223).